Here is a 133-residue protein sequence, read N- to C-terminus: p53 and DNA damage-regulated protein 1 (133 aa).

It belongs to the prefoldin subunit beta family. As to quaternary structure, component of the PAQosome complex which is responsible for the biogenesis of several protein complexes and which consists of R2TP complex members RUVBL1, RUVBL2, RPAP3 and PIH1D1, URI complex members PFDN2, PFDN6, PDRG1, UXT and URI1 as well as ASDURF, POLR2E and DNAAF10/WDR92.

The protein localises to the cytoplasm. In terms of biological role, may play a role in chaperone-mediated protein folding. In Rattus norvegicus (Rat), this protein is p53 and DNA damage-regulated protein 1 (Pdrg1).